The primary structure comprises 79 residues: Conotoxin ArMSGL-021 (79 aa).

The first 20 residues, 1-20, serve as a signal peptide directing secretion; the sequence is MSRLGIMVLTLLLLVFIVTS. Positions 21 to 44 are excised as a propeptide; the sequence is HQDAGEKQATHRGAINFRWRRSLI. Disulfide bonds link Cys52–Cys64, Cys56–Cys73, and Cys63–Cys77. Leucine amide is present on Leu78.

Belongs to the conotoxin O3 superfamily. As to expression, expressed by the venom duct.

The protein resides in the secreted. The sequence is that of Conotoxin ArMSGL-021 from Conus arenatus (Sand-dusted cone).